The following is a 261-amino-acid chain: Putative cysteine protease YopT-like y4zC (261 aa).

A compositionally biased stretch (polar residues) spans 1 to 15 (MHSPISGSFTSSTQV). 2 disordered regions span residues 1–48 (MHSP…CPDK) and 54–73 (SKPQASDPNNPSTSSPARPS). The span at 61–73 (PNNPSTSSPARPS) shows a compositional bias: low complexity. Residues C93, H205, and D220 contribute to the active site.

This sequence belongs to the peptidase C58 family.

Its function is as follows. Potential cysteine protease, which may play a central role after invasion of host cell. This chain is Putative cysteine protease YopT-like y4zC, found in Sinorhizobium fredii (strain NBRC 101917 / NGR234).